We begin with the raw amino-acid sequence, 816 residues long: uncharacterized protein (816 aa).

503 to 534 (DTWTVITGGTDGIGKAYIEELCKTRGLKKFYL) provides a ligand contact to NADP(+). Ser-641 lines the substrate pocket. Catalysis depends on Tyr-661, which acts as the Proton acceptor. The next 2 helical transmembrane spans lie at 743–763 (FGFS…SIVL) and 777–797 (VFII…FLLN).

Belongs to the short-chain dehydrogenases/reductases (SDR) family.

It is found in the membrane. This is an uncharacterized protein from Caenorhabditis elegans.